We begin with the raw amino-acid sequence, 93 residues long: DNA-directed RNA polymerase subunit Rpo11 (93 aa).

This sequence belongs to the archaeal Rpo11/eukaryotic RPB11/RPC19 RNA polymerase subunit family. As to quaternary structure, part of the RNA polymerase complex.

It localises to the cytoplasm. The enzyme catalyses RNA(n) + a ribonucleoside 5'-triphosphate = RNA(n+1) + diphosphate. DNA-dependent RNA polymerase (RNAP) catalyzes the transcription of DNA into RNA using the four ribonucleoside triphosphates as substrates. The polypeptide is DNA-directed RNA polymerase subunit Rpo11 (Sulfurisphaera tokodaii (strain DSM 16993 / JCM 10545 / NBRC 100140 / 7) (Sulfolobus tokodaii)).